We begin with the raw amino-acid sequence, 202 residues long: Sperm-specific H1/protamine-like protein type 1 (202 aa).

Basic residues predominate over residues 1 to 35 (MPSPSRKSRSRSRSRSKSPKRSPAKKARKTPKKPR). 2 disordered regions span residues 1-46 (MPSP…PTTL) and 104-202 (KTSA…QFAL). In terms of domain architecture, H15 spans 41–120 (KKPTTLSMIV…GATGSFRVGK (80 aa)). Residues 126–156 (KKAKKAKSPKKKSSKKSKNKSNNAKAKKSPK) are compositionally biased toward basic residues. Residues 177 to 187 (GARYPFRYQAY) are compositionally biased toward low complexity.

Post-translationally, OE1 and OE3 are produced by post-translational cleavage of a common precursor. As to expression, sperm.

Its subcellular location is the nucleus. It is found in the chromosome. Linker histones are implicated in chromatin remodeling and/or transcriptional regulation during spermiogenesis, the process of spermatid maturation into spermatozoa. Protamines substitute for histones in the chromatin of sperm during the haploid phase of spermatogenesis. They compact sperm DNA into a highly condensed, stable and inactive complex. In Ostrea edulis (Native oyster), this protein is Sperm-specific H1/protamine-like protein type 1.